Reading from the N-terminus, the 370-residue chain is MSFNTFGHLFRVTTFGESHGAAIGCVVDGCPPNLRFTLEDVQAALDRRRPGQSRFTTQRREPDQVKVLSGTLEHPEGGLVTTGTPIALLIENVDQRSKDYADIAGAYRPGHADFTYDIKYGIRDHRGGGRSSARETATRVAAGAIAAKVLPGVTVRGAVVRIGEIEIDRSRWDWNEVPNNPFFCPDPKTVPLWEEYLDAVRKAGSSIGAVVELVAEGVPAGLGAPLYGKLDADLASALLGINAAKGVEIGEGFNAAQLTGEENADEMRLGNEGRPQFLSNHAGGILGGIATGAPIVARFALKPTSSILTPRQTVDRTGQETEIFTKGRHDPCVGIRAVPVGEAMMWCVLADHFLRHRGQVGESVAWPFKG.

Residues arginine 48 and arginine 54 each coordinate NADP(+). Residues 130-132, 242-243, glycine 287, 302-306, and arginine 328 contribute to the FMN site; these read RSS, NA, and KPTSS.

Belongs to the chorismate synthase family. As to quaternary structure, homotetramer. FMNH2 is required as a cofactor.

The catalysed reaction is 5-O-(1-carboxyvinyl)-3-phosphoshikimate = chorismate + phosphate. The protein operates within metabolic intermediate biosynthesis; chorismate biosynthesis; chorismate from D-erythrose 4-phosphate and phosphoenolpyruvate: step 7/7. Its function is as follows. Catalyzes the anti-1,4-elimination of the C-3 phosphate and the C-6 proR hydrogen from 5-enolpyruvylshikimate-3-phosphate (EPSP) to yield chorismate, which is the branch point compound that serves as the starting substrate for the three terminal pathways of aromatic amino acid biosynthesis. This reaction introduces a second double bond into the aromatic ring system. This chain is Chorismate synthase, found in Xanthobacter autotrophicus (strain ATCC BAA-1158 / Py2).